Consider the following 297-residue polypeptide: uncharacterized protein (297 aa).

Residues Phe-136–Lys-174 are disordered. Acidic residues predominate over residues Thr-139–Asn-170.

It to S.pombe SpBC725.03.

This is an uncharacterized protein from Saccharomyces cerevisiae (strain ATCC 204508 / S288c) (Baker's yeast).